A 360-amino-acid chain; its full sequence is Aspartate beta-hydroxylase domain-containing protein 1 (360 aa).

Topologically, residues 1 to 45 are cytoplasmic; it reads MWKGGNQEAVIEGSGGELGVPGSWGLQDAACHLARASLPIMFPWP. Residues 46–68 traverse the membrane as a helical segment; that stretch reads LPLGSSALTMLLGALTSLFLWYC. Residues 69–360 lie on the Lumenal side of the membrane; that stretch reads YRLGSQDMQA…ALDFVFAPDP (292 aa).

It belongs to the aspartyl/asparaginyl beta-hydroxylase family.

Its subcellular location is the membrane. This chain is Aspartate beta-hydroxylase domain-containing protein 1 (Asphd1), found in Mus musculus (Mouse).